The sequence spans 102 residues: Large ribosomal subunit protein uL24 (102 aa).

The protein belongs to the universal ribosomal protein uL24 family. As to quaternary structure, part of the 50S ribosomal subunit.

In terms of biological role, one of two assembly initiator proteins, it binds directly to the 5'-end of the 23S rRNA, where it nucleates assembly of the 50S subunit. Functionally, one of the proteins that surrounds the polypeptide exit tunnel on the outside of the subunit. The protein is Large ribosomal subunit protein uL24 of Rhizobium leguminosarum bv. trifolii (strain WSM2304).